We begin with the raw amino-acid sequence, 310 residues long: Transcriptional regulator NRG1 (310 aa).

The disordered stretch occupies residues 85 to 131; the sequence is YYMGPPAQHRLPTPPPYPMSSPTTATAATPLSQQSPHLQPQQTLQQP. Low complexity predominate over residues 104 to 131; the sequence is SSPTTATAATPLSQQSPHLQPQQTLQQP. 2 consecutive C2H2-type zinc fingers follow at residues 228 to 250 and 256 to 280; these read HVCK…NRIH and HQCP…YKTH.

The protein resides in the nucleus. Functionally, transcriptional repressor that binds NRG1 response elements (NRE) of target promoters. Involved in regulation of chlamydospore formation, hyphal growth, virulence, and stress response. Plays a key role in regulating true hyphal growth, but does not regulate pseudohyphal growth in the same fashion. Directs transcriptional repression of a subset of filament-specific genes such as HWP1, HYR1, ALS8, HWP1, or ECE1; via the TUP1 pathway. Functions with UME6 in a negative feedback loop to control the level and duration of filament-specific gene expression in response to inducing conditions. Plays a key role in biofilm formation and dispersion. Also plays the role of a negative regulator of virulence in mice models. Required for the expression of the cell wall genes RBR1. The chain is Transcriptional regulator NRG1 (NRG1) from Candida albicans (strain SC5314 / ATCC MYA-2876) (Yeast).